Reading from the N-terminus, the 61-residue chain is Probable tautomerase stu1128 (61 aa).

Pro2 serves as the catalytic Proton acceptor; via imino nitrogen.

The protein belongs to the 4-oxalocrotonate tautomerase family.

The polypeptide is Probable tautomerase stu1128 (Streptococcus thermophilus (strain ATCC BAA-250 / LMG 18311)).